We begin with the raw amino-acid sequence, 83 residues long: ATP synthase subunit c (83 aa).

The next 2 membrane-spanning stretches (helical) occupy residues 10-30 (IAVALLIGMGALGTAIGFGLL) and 52-72 (MFIVAGLLDAVTMIGVGIALF).

It belongs to the ATPase C chain family. As to quaternary structure, F-type ATPases have 2 components, F(1) - the catalytic core - and F(0) - the membrane proton channel. F(1) has five subunits: alpha(3), beta(3), gamma(1), delta(1), epsilon(1). F(0) has three main subunits: a(1), b(2) and c(10-14). The alpha and beta chains form an alternating ring which encloses part of the gamma chain. F(1) is attached to F(0) by a central stalk formed by the gamma and epsilon chains, while a peripheral stalk is formed by the delta and b chains.

It is found in the cell inner membrane. Its function is as follows. F(1)F(0) ATP synthase produces ATP from ADP in the presence of a proton or sodium gradient. F-type ATPases consist of two structural domains, F(1) containing the extramembraneous catalytic core and F(0) containing the membrane proton channel, linked together by a central stalk and a peripheral stalk. During catalysis, ATP synthesis in the catalytic domain of F(1) is coupled via a rotary mechanism of the central stalk subunits to proton translocation. Key component of the F(0) channel; it plays a direct role in translocation across the membrane. A homomeric c-ring of between 10-14 subunits forms the central stalk rotor element with the F(1) delta and epsilon subunits. The polypeptide is ATP synthase subunit c (Shewanella baltica (strain OS223)).